Consider the following 352-residue polypeptide: Probable dual-specificity RNA methyltransferase RlmN (352 aa).

Residue glutamate 99 is the Proton acceptor of the active site. A Radical SAM core domain is found at 105-339 (TKSRTTACVS…VTVRRSRGKD (235 aa)). Cysteine 112 and cysteine 344 are joined by a disulfide. Residues cysteine 119, cysteine 123, and cysteine 126 each contribute to the [4Fe-4S] cluster site. S-adenosyl-L-methionine contacts are provided by residues 170–171 (GE), serine 202, 225–227 (SLH), and asparagine 301. Residue cysteine 344 is the S-methylcysteine intermediate of the active site.

Belongs to the radical SAM superfamily. RlmN family. The cofactor is [4Fe-4S] cluster.

The protein localises to the cytoplasm. It catalyses the reaction adenosine(2503) in 23S rRNA + 2 reduced [2Fe-2S]-[ferredoxin] + 2 S-adenosyl-L-methionine = 2-methyladenosine(2503) in 23S rRNA + 5'-deoxyadenosine + L-methionine + 2 oxidized [2Fe-2S]-[ferredoxin] + S-adenosyl-L-homocysteine. The catalysed reaction is adenosine(37) in tRNA + 2 reduced [2Fe-2S]-[ferredoxin] + 2 S-adenosyl-L-methionine = 2-methyladenosine(37) in tRNA + 5'-deoxyadenosine + L-methionine + 2 oxidized [2Fe-2S]-[ferredoxin] + S-adenosyl-L-homocysteine. Its function is as follows. Specifically methylates position 2 of adenine 2503 in 23S rRNA and position 2 of adenine 37 in tRNAs. The chain is Probable dual-specificity RNA methyltransferase RlmN from Christiangramia forsetii (strain DSM 17595 / CGMCC 1.15422 / KT0803) (Gramella forsetii).